A 151-amino-acid polypeptide reads, in one-letter code: Transcriptional repressor NrdR (151 aa).

A zinc finger lies at 3-34 (CPYCGSLDNKVIDSRLSRDDTETRRRRECLEC). The ATP-cone domain maps to 49–139 (LMIVKKDGRR…VYREFKDVHD (91 aa)).

This sequence belongs to the NrdR family. Zn(2+) serves as cofactor.

Functionally, negatively regulates transcription of bacterial ribonucleotide reductase nrd genes and operons by binding to NrdR-boxes. The chain is Transcriptional repressor NrdR from Desulfosudis oleivorans (strain DSM 6200 / JCM 39069 / Hxd3) (Desulfococcus oleovorans).